Here is a 776-residue protein sequence, read N- to C-terminus: Systemic RNA interference defective protein 1 (776 aa).

The signal sequence occupies residues 1–17 (MIRVYLIILMHLVIGLT). Residues 18-319 (QNNSTTPSPI…ENQSYAVPTA (302 aa)) lie on the Extracellular side of the membrane. Asn19, Asn20, Asn32, Asn205, Asn210, Asn234, Asn290, and Asn311 each carry an N-linked (GlcNAc...) asparagine glycan. Residues 22–312 (TTPSPIITSS…SFEFKKLENQ (291 aa)) form an involved in dsRNA-binding region. Residues 320-340 (LMMIFLTTPCLLFLPIVINII) traverse the membrane as a helical segment. Over 341-429 (KNSRKLAPSQ…KQDSLSLHGQ (89 aa)) the chain is Cytoplasmic. Residues 360-390 (PSEQRDMDLSHDEQQNTSSELENNGEIPAAE) are disordered. Positions 362 to 373 (EQRDMDLSHDEQ) are enriched in basic and acidic residues. A helical transmembrane segment spans residues 430–450 (MLQYPVAIILPVLMHTAIEFH). Topologically, residues 451–481 (KWTTSTMANRDEMCFHNHACARPLGELRAWN) are extracellular. Residues 482–502 (NIITNIGYTLYGAIFIVLSIC) traverse the membrane as a helical segment. Residues 503–510 (RRGRHEYS) lie on the Cytoplasmic side of the membrane. Residues 511–531 (HVFGTYECTLLDVTIGVFMVL) form a helical membrane-spanning segment. The Extracellular segment spans residues 532-543 (QSIASATYHICP). Residues 544-564 (SDVAFQFDTPCIQVICGLLMV) traverse the membrane as a helical segment. The Cytoplasmic portion of the chain corresponds to 565-575 (RQWFVRHESPS). The helical transmembrane segment at 576–596 (PAYTNILLVGVVSLNFLISAF) threads the bilayer. Residues 597-599 (SKT) are Extracellular-facing. Residues 600-620 (SYVRFIIAVIHVIVVGSICLA) form a helical membrane-spanning segment. At 621-633 (KERSLGSEKLKTR) the chain is on the cytoplasmic side. Residues 634-654 (FFIMAFSMGNFAAIVMYLTLS) traverse the membrane as a helical segment. Residues 655–659 (AFHLN) are Extracellular-facing. Residues 660–680 (QIATYCFIINCIMYLMYYGCM) form a helical membrane-spanning segment. The Cytoplasmic segment spans residues 681–691 (KVLHSERITSK). Residues 692–712 (AKLCGALSLLAWAVAGFFFFQ) traverse the membrane as a helical segment. The Extracellular segment spans residues 713-741 (DDTDWTRSAAASRALNKPCLLLGFFGSHD). A helical membrane pass occupies residues 742–762 (LWHIFGALAGLFTFIFVSFVD). Residues 763-776 (DDLINTRKTSINIF) lie on the Cytoplasmic side of the membrane.

This sequence belongs to the SID1 family. As to quaternary structure, may self-associate to form multimers. As to expression, expressed in most non-neuronal cells, including body wall muscle cells.

It is found in the cell membrane. Plays a role in RNA-mediated gene silencing by acting cell-autonomously as a channel for the transport of double-stranded RNA (dsRNA) between cells. Mediates the spread of dsRNA and subsequent silencing of genes in cells distant from the site of dsRNA introduction. Selective for dsRNA. Preferentially binds long dsRNA, from 50 base pairs up to 700. Short 20 base-pair long molecules are not bound. May also bind dsDNA, but with lower affinity. Binding may be sequence-independent. Required for avoidance behavior induced by small RNAs derived from pathogenic bacteria such as P.aeruginosa. The protein is Systemic RNA interference defective protein 1 of Caenorhabditis elegans.